The primary structure comprises 239 residues: MRQSGRKSNQLRPISLELSPLINTEGSCIIKIGNTHVMCSATCETTVPPFLRGQNQGWVTAEYGMLPGSTSQRIKREAAQGKQGGRTQEIQRLIGRSMRCVMDLKKLGERQIIIDCDVINADGGTRTASITGSYVALHLAIRSLMKKRILKVNPLISQIAAVSCGIYKGEAILDLDYLEDSDAEVDSNFVFAGNGNLIEVQGTAEQEPFSEEQFIEMLKLAKCGAAELFKLQNQVLLGT.

Residues R86 and 124 to 126 each bind phosphate; that span reads GTR.

It belongs to the RNase PH family. In terms of assembly, homohexameric ring arranged as a trimer of dimers.

It carries out the reaction tRNA(n+1) + phosphate = tRNA(n) + a ribonucleoside 5'-diphosphate. Its function is as follows. Phosphorolytic 3'-5' exoribonuclease that plays an important role in tRNA 3'-end maturation. Removes nucleotide residues following the 3'-CCA terminus of tRNAs; can also add nucleotides to the ends of RNA molecules by using nucleoside diphosphates as substrates, but this may not be physiologically important. Probably plays a role in initiation of 16S rRNA degradation (leading to ribosome degradation) during starvation. This Rickettsia akari (strain Hartford) protein is Ribonuclease PH.